Reading from the N-terminus, the 655-residue chain is p-hydroxybenzoic acid efflux pump subunit AaeB (655 aa).

Over 1 to 12 the chain is Periplasmic; that stretch reads MGIFSIANQHIR. The chain crosses the membrane as a helical span at residues 13–33; the sequence is FAVKLATAIVLALFVGFHFQL. Topologically, residues 34 to 37 are cytoplasmic; that stretch reads ETPR. The chain crosses the membrane as a helical span at residues 38 to 58; sequence WAVLTAAIVAAGPAFAAGGEP. Residues 59-68 lie on the Periplasmic side of the membrane; the sequence is YSGAIRYRGF. Residues 69–89 traverse the membrane as a helical segment; it reads LRIIGTFIGCIAGLVIIIAMI. Residues 90–92 are Cytoplasmic-facing; the sequence is RAP. A helical transmembrane segment spans residues 93 to 113; the sequence is LLMILVCCIWAGFCTWISSLV. Over 114 to 120 the chain is Periplasmic; the sequence is RIENSYA. A helical membrane pass occupies residues 121 to 141; that stretch reads WGLAGYTALIIVITIQPEPLL. Topologically, residues 142–151 are cytoplasmic; the sequence is TPQFAVERCS. A helical transmembrane segment spans residues 152 to 172; the sequence is EIVIGIVCAIMADLLFSPRSI. Topologically, residues 173-369 are periplasmic; it reads KQEVDRELES…RTTLSCILGT (197 aa). Residues 370 to 390 traverse the membrane as a helical segment; the sequence is LFWLWTGWTSGSGAMVMIAVV. Residues 391-406 lie on the Cytoplasmic side of the membrane; the sequence is TSLAMRLPNPRMVAID. The chain crosses the membrane as a helical span at residues 407–427; it reads FIYGTLAALPLGLLYFLVIIP. Residues 428 to 430 lie on the Periplasmic side of the membrane; that stretch reads NTQ. The helical transmembrane segment at 431 to 451 threads the bilayer; the sequence is QSMLLLCISLAVLGFFLGIEV. The Cytoplasmic segment spans residues 452 to 458; that stretch reads QKRRLGS. A helical membrane pass occupies residues 459–479; the sequence is MGALASTINIIVLDNPMTFHF. The Periplasmic portion of the chain corresponds to 480–481; that stretch reads SQ. The helical transmembrane segment at 482 to 502 threads the bilayer; the sequence is FLDSALGQIVGCVLAFTVILL. Residues 503 to 655 lie on the Cytoplasmic side of the membrane; the sequence is VRDKSRDRTG…HKYQHALTDS (153 aa).

Belongs to the aromatic acid exporter ArAE (TC 2.A.85) family.

The protein localises to the cell inner membrane. In terms of biological role, forms an efflux pump with AaeA. Could function as a metabolic relief valve, allowing to eliminate certain compounds when they accumulate to high levels in the cell. This is p-hydroxybenzoic acid efflux pump subunit AaeB from Escherichia coli O6:H1 (strain CFT073 / ATCC 700928 / UPEC).